Reading from the N-terminus, the 213-residue chain is Nucleoside triphosphate pyrophosphatase (213 aa).

The active-site Proton acceptor is the aspartate 79.

The protein belongs to the Maf family. Requires a divalent metal cation as cofactor.

It is found in the cytoplasm. The enzyme catalyses a ribonucleoside 5'-triphosphate + H2O = a ribonucleoside 5'-phosphate + diphosphate + H(+). It catalyses the reaction a 2'-deoxyribonucleoside 5'-triphosphate + H2O = a 2'-deoxyribonucleoside 5'-phosphate + diphosphate + H(+). In terms of biological role, nucleoside triphosphate pyrophosphatase. May have a dual role in cell division arrest and in preventing the incorporation of modified nucleotides into cellular nucleic acids. This is Nucleoside triphosphate pyrophosphatase from Rhodococcus erythropolis (strain PR4 / NBRC 100887).